Consider the following 272-residue polypeptide: Acyl-[acyl-carrier-protein]--UDP-N-acetylglucosamine O-acyltransferase (272 aa).

Belongs to the transferase hexapeptide repeat family. LpxA subfamily. In terms of assembly, homotrimer.

It is found in the cytoplasm. It catalyses the reaction a (3R)-hydroxyacyl-[ACP] + UDP-N-acetyl-alpha-D-glucosamine = a UDP-3-O-[(3R)-3-hydroxyacyl]-N-acetyl-alpha-D-glucosamine + holo-[ACP]. It functions in the pathway glycolipid biosynthesis; lipid IV(A) biosynthesis; lipid IV(A) from (3R)-3-hydroxytetradecanoyl-[acyl-carrier-protein] and UDP-N-acetyl-alpha-D-glucosamine: step 1/6. Its function is as follows. Involved in the biosynthesis of lipid A, a phosphorylated glycolipid that anchors the lipopolysaccharide to the outer membrane of the cell. This chain is Acyl-[acyl-carrier-protein]--UDP-N-acetylglucosamine O-acyltransferase, found in Rhizobium etli (strain ATCC 51251 / DSM 11541 / JCM 21823 / NBRC 15573 / CFN 42).